A 362-amino-acid polypeptide reads, in one-letter code: S-adenosylmethionine decarboxylase proenzyme 2 (362 aa).

Residues glutamate 9 and glutamate 12 contribute to the active site. Glutamate 68 is a substrate binding site. The Schiff-base intermediate with substrate; via pyruvic acid role is filled by serine 69. Position 69 is a pyruvic acid (Ser); by autocatalysis (serine 69). Cysteine 83 functions as the Proton donor; for catalytic activity in the catalytic mechanism. Residues serine 232 and histidine 245 each act as proton acceptor; for processing activity in the active site. Glutamate 249 contributes to the substrate binding site.

It belongs to the eukaryotic AdoMetDC family. Pyruvate serves as cofactor. Post-translationally, is synthesized initially as an inactive proenzyme. Formation of the active enzyme involves a self-maturation process in which the active site pyruvoyl group is generated from an internal serine residue via an autocatalytic post-translational modification. Two non-identical subunits are generated from the proenzyme in this reaction, and the pyruvate is formed at the N-terminus of the alpha chain, which is derived from the carboxyl end of the proenzyme. The post-translation cleavage follows an unusual pathway, termed non-hydrolytic serinolysis, in which the side chain hydroxyl group of the serine supplies its oxygen atom to form the C-terminus of the beta chain, while the remainder of the serine residue undergoes an oxidative deamination to produce ammonia and the pyruvoyl group blocking the N-terminus of the alpha chain.

The catalysed reaction is S-adenosyl-L-methionine + H(+) = S-adenosyl 3-(methylsulfanyl)propylamine + CO2. It functions in the pathway amine and polyamine biosynthesis; S-adenosylmethioninamine biosynthesis; S-adenosylmethioninamine from S-adenosyl-L-methionine: step 1/1. Essential for biosynthesis of the polyamines spermidine and spermine. Essential for polyamine homeostasis, and normal plant embryogenesis, growth and development. The sequence is that of S-adenosylmethionine decarboxylase proenzyme 2 from Arabidopsis thaliana (Mouse-ear cress).